A 2885-amino-acid polypeptide reads, in one-letter code: Chromodomain-helicase-DNA-binding protein 9 (2885 aa).

The segment at 173 to 195 (QCSSLHSQQSRSNLNPGQNSLGQ) is disordered. K197 is covalently cross-linked (Glycyl lysine isopeptide (Lys-Gly) (interchain with G-Cter in SUMO2)). Disordered regions lie at residues 242–263 (CSSH…CSVS), 283–347 (SLLQ…QGNY), and 479–677 (CLQR…QPLQ). 2 stretches are compositionally biased toward polar residues: residues 243-263 (SSHQ…CSVS) and 283-310 (SLLQ…NSFS). A compositionally biased stretch (low complexity) spans 323 to 334 (LLNPTPSLNSNN). Composition is skewed to polar residues over residues 335 to 347 (FQIL…QGNY) and 483 to 505 (QPPS…TQVR). Residue K498 is modified to N6-acetyllysine. Composition is skewed to basic and acidic residues over residues 507–526 (MSEK…EKAN) and 534–544 (ARAKERGERNI). S549 is modified (phosphoserine). Basic and acidic residues predominate over residues 572–592 (KPKDRDNKKPKTYSKLKEKTK). Residue K595 forms a Glycyl lysine isopeptide (Lys-Gly) (interchain with G-Cter in SUMO2) linkage. Residue S610 is modified to Phosphoserine. A compositionally biased stretch (basic and acidic residues) spans 617–630 (AEQRSQHTFKEQHS). Positions 631–643 (QKRRSNRQIKRKK) are enriched in basic residues. Residues 644 to 659 (YAEDAEGKQSEEEVKG) show a composition bias toward basic and acidic residues. Chromo domains lie at 689–760 (AIVD…HFLA) and 772–838 (VEVD…HLDR). An LXXLL motif 1 motif is present at residues 867–871 (LNWLL). The Helicase ATP-binding domain occupies 871 to 1045 (LFNWYNRRNC…FSLLHFLEPL (175 aa)). 884–891 (DEMGLGKT) lines the ATP pocket. The DEAH box signature appears at 996–999 (DEAH). The LXXLL motif 2 signature appears at 1035 to 1039 (LFSLL). In terms of domain architecture, Helicase C-terminal spans 1185–1336 (LIDKLLPKMK…KAVLQSMSGR (152 aa)). The tract at residues 1460 to 1484 (KDELAELSEAESEGEEKPKLRRPCD) is disordered. Over residues 1464-1473 (AELSEAESEG) the composition is skewed to acidic residues. 2 positions are modified to phosphoserine: S1467 and S1471. A compositionally biased stretch (basic and acidic residues) spans 1474–1484 (EEKPKLRRPCD). Glycyl lysine isopeptide (Lys-Gly) (interchain with G-Cter in SUMO2) cross-links involve residues K1587, K1737, and K1902. Position 2025 is a phosphoserine (S2025). The LXXLL motif 3 signature appears at 2030–2034 (LPRLL). K2037 participates in a covalent cross-link: Glycyl lysine isopeptide (Lys-Gly) (interchain with G-Cter in SUMO2). The interval 2046-2238 (VKSESLTEEP…TQDSFQANNG (193 aa)) is disordered. Phosphoserine occurs at positions 2057 and 2058. K2073 is covalently cross-linked (Glycyl lysine isopeptide (Lys-Gly) (interchain with G-Cter in SUMO2)). Residues S2074 and S2078 each carry the phosphoserine modification. A compositionally biased stretch (polar residues) spans 2083–2092 (VLSQATGDQK). Residues 2093-2103 (SGGKSETDRRM) show a composition bias toward basic and acidic residues. Low complexity predominate over residues 2127 to 2193 (SQSSSDSDSD…SSSSSSSSSS (67 aa)). Basic and acidic residues predominate over residues 2201–2215 (DVQKREGTPHRKAYD). Residues 2220 to 2238 (ASLSTTQDETQDSFQANNG) are compositionally biased toward polar residues. The segment at 2331–2471 (QMSKVKKHVR…LSYPQPQRIP (141 aa)) is binds A/T-rich DNA. Glycyl lysine isopeptide (Lys-Gly) (interchain with G-Cter in SUMO2) cross-links involve residues K2349, K2355, and K2360. Residues 2428-2435 (KKRRGRRR) form an a.T hook-like region. The segment at 2473–2494 (TESPVPVINLKDGTRLAGDDAP) is disordered. Basic and acidic residues predominate over residues 2484–2494 (DGTRLAGDDAP). The LXXLL motif 4 motif lies at 2710–2714 (LPNLL). The tract at residues 2724–2770 (AESGAEEKRGNDSKELEGKKERTESQSPENGGERCVPGSPSTSSTAA) is disordered. Over residues 2728–2747 (AEEKRGNDSKELEGKKERTE) the composition is skewed to basic and acidic residues. An LXXLL motif 5 motif is present at residues 2782 to 2786 (LNPLL). Positions 2818–2847 (KNKSDDLDSSKSVEIKEENSRVRDQEEKGG) are enriched in basic and acidic residues. Residues 2818–2885 (KNKSDDLDSS…SEDSDSSNED (68 aa)) are disordered. K2833 participates in a covalent cross-link: Glycyl lysine isopeptide (Lys-Gly) (interchain with G-Cter in SUMO2). Residues 2864–2876 (RASSGSDSSSSSS) show a composition bias toward low complexity.

It belongs to the SNF2/RAD54 helicase family. As to quaternary structure, interacts with PPARA. Probably interacts with ESR1 and NR1I3. In terms of processing, phosphorylated on serine and tyrosine residues. As to expression, expressed in osteoprogenitor cells during development and in mature bone (at protein level).

The protein resides in the cytoplasm. It localises to the nucleus. The enzyme catalyses ATP + H2O = ADP + phosphate + H(+). Its function is as follows. Probable ATP-dependent chromatin-remodeling factor. Acts as a transcriptional coactivator for PPARA and possibly other nuclear receptors. Has DNA-dependent ATPase activity and binds to A/T-rich DNA. Associates with A/T-rich regulatory regions in promoters of genes that participate in the differentiation of progenitors during osteogenesis. This Mus musculus (Mouse) protein is Chromodomain-helicase-DNA-binding protein 9 (Chd9).